The sequence spans 576 residues: Arginine--tRNA ligase (576 aa).

The short motif at 132 to 142 is the 'HIGH' region element; the sequence is ANPTGPMHIGH.

This sequence belongs to the class-I aminoacyl-tRNA synthetase family. In terms of assembly, monomer.

The protein resides in the cytoplasm. It carries out the reaction tRNA(Arg) + L-arginine + ATP = L-arginyl-tRNA(Arg) + AMP + diphosphate. This chain is Arginine--tRNA ligase, found in Ehrlichia ruminantium (strain Welgevonden).